Consider the following 312-residue polypeptide: Homoserine kinase (312 aa).

91–101 is an ATP binding site; sequence PVASGLGSSAC.

The protein belongs to the GHMP kinase family. Homoserine kinase subfamily.

It localises to the cytoplasm. It catalyses the reaction L-homoserine + ATP = O-phospho-L-homoserine + ADP + H(+). It functions in the pathway amino-acid biosynthesis; L-threonine biosynthesis; L-threonine from L-aspartate: step 4/5. Catalyzes the ATP-dependent phosphorylation of L-homoserine to L-homoserine phosphate. This Blochmanniella pennsylvanica (strain BPEN) protein is Homoserine kinase.